The primary structure comprises 201 residues: Protein GrpE (201 aa).

Belongs to the GrpE family. Homodimer.

The protein localises to the cytoplasm. In terms of biological role, participates actively in the response to hyperosmotic and heat shock by preventing the aggregation of stress-denatured proteins, in association with DnaK and GrpE. It is the nucleotide exchange factor for DnaK and may function as a thermosensor. Unfolded proteins bind initially to DnaJ; upon interaction with the DnaJ-bound protein, DnaK hydrolyzes its bound ATP, resulting in the formation of a stable complex. GrpE releases ADP from DnaK; ATP binding to DnaK triggers the release of the substrate protein, thus completing the reaction cycle. Several rounds of ATP-dependent interactions between DnaJ, DnaK and GrpE are required for fully efficient folding. This chain is Protein GrpE, found in Shewanella denitrificans (strain OS217 / ATCC BAA-1090 / DSM 15013).